We begin with the raw amino-acid sequence, 487 residues long: Calcium-binding tyrosine phosphorylation-regulated protein (487 aa).

Positions 12 to 49 constitute an RIIa domain; it reads YGLKTLLEGISRAVLKTNPSDINQFAAAYFQELTMYRG. Composition is skewed to basic and acidic residues over residues 78 to 91 and 101 to 117; these read KKLE…KTSV and KSTD…EYSD. Disordered regions lie at residues 78 to 163, 243 to 271, and 420 to 487; these read KKLE…AVSP, VDLG…QEPP, and IVSD…ATAE. Residues 140-152 show a composition bias toward low complexity; that stretch reads SSSKPATPKATTP. Composition is skewed to polar residues over residues 420–436 and 455–464; these read IVSD…NSVP and SGTSVKSSSG. Acidic residues predominate over residues 478 to 487; the sequence is IEPEGEATAE.

As to quaternary structure, interacts with FSCB. Phosphorylated on tyrosine residues during in vitro capacitation. Dephosphorylation affects its ability to bind calcium.

The protein localises to the cytoplasm. The protein resides in the cytoskeleton. It localises to the cell projection. Its subcellular location is the cilium. It is found in the flagellum. May function as a regulator of both motility- and head-associated functions such as capacitation and the acrosome reaction. May bind calcium in vitro. This is Calcium-binding tyrosine phosphorylation-regulated protein (CABYR) from Macaca fascicularis (Crab-eating macaque).